The primary structure comprises 444 residues: Methylenetetrahydrofolate--tRNA-(uracil-5-)-methyltransferase TrmFO (444 aa).

Residue 10-15 (GAGLAG) coordinates FAD.

Belongs to the MnmG family. TrmFO subfamily. It depends on FAD as a cofactor.

The protein localises to the cytoplasm. It catalyses the reaction uridine(54) in tRNA + (6R)-5,10-methylene-5,6,7,8-tetrahydrofolate + NADH + H(+) = 5-methyluridine(54) in tRNA + (6S)-5,6,7,8-tetrahydrofolate + NAD(+). The catalysed reaction is uridine(54) in tRNA + (6R)-5,10-methylene-5,6,7,8-tetrahydrofolate + NADPH + H(+) = 5-methyluridine(54) in tRNA + (6S)-5,6,7,8-tetrahydrofolate + NADP(+). In terms of biological role, catalyzes the folate-dependent formation of 5-methyl-uridine at position 54 (M-5-U54) in all tRNAs. The protein is Methylenetetrahydrofolate--tRNA-(uracil-5-)-methyltransferase TrmFO of Streptococcus pneumoniae (strain 70585).